A 338-amino-acid polypeptide reads, in one-letter code: Beta-ketoacyl-[acyl-carrier-protein] synthase III (338 aa).

Catalysis depends on residues C119 and H261. An ACP-binding region spans residues 262-266; the sequence is QANQR. N291 is a catalytic residue.

This sequence belongs to the thiolase-like superfamily. FabH family. In terms of assembly, homodimer.

It localises to the cytoplasm. The enzyme catalyses malonyl-[ACP] + acetyl-CoA + H(+) = 3-oxobutanoyl-[ACP] + CO2 + CoA. It functions in the pathway lipid metabolism; fatty acid biosynthesis. Functionally, catalyzes the condensation reaction of fatty acid synthesis by the addition to an acyl acceptor of two carbons from malonyl-ACP. Catalyzes the first condensation reaction which initiates fatty acid synthesis and may therefore play a role in governing the total rate of fatty acid production. Possesses both acetoacetyl-ACP synthase and acetyl transacylase activities. Its substrate specificity determines the biosynthesis of branched-chain and/or straight-chain of fatty acids. This chain is Beta-ketoacyl-[acyl-carrier-protein] synthase III, found in Prochlorococcus marinus (strain SARG / CCMP1375 / SS120).